Here is a 245-residue protein sequence, read N- to C-terminus: Small ribosomal subunit protein uS2 (245 aa).

The protein belongs to the universal ribosomal protein uS2 family.

The sequence is that of Small ribosomal subunit protein uS2 from Pseudomonas putida (strain W619).